The sequence spans 333 residues: Ornithine carbamoyltransferase (333 aa).

Residues 56-59 (STRT), R107, and 134-137 (HPTQ) contribute to the carbamoyl phosphate site. L-ornithine-binding positions include N167, D231, and 235–236 (SM). Residues 273-274 (CL) and R318 contribute to the carbamoyl phosphate site.

Belongs to the aspartate/ornithine carbamoyltransferase superfamily. OTCase family.

The protein resides in the cytoplasm. It carries out the reaction carbamoyl phosphate + L-ornithine = L-citrulline + phosphate + H(+). It functions in the pathway amino-acid degradation; L-arginine degradation via ADI pathway; carbamoyl phosphate from L-arginine: step 2/2. Reversibly catalyzes the transfer of the carbamoyl group from carbamoyl phosphate (CP) to the N(epsilon) atom of ornithine (ORN) to produce L-citrulline. This is Ornithine carbamoyltransferase from Clostridium botulinum (strain ATCC 19397 / Type A).